We begin with the raw amino-acid sequence, 495 residues long: MAGKLVSLVPPLLLAAVGLAGLLLLCVPTQDVREPPALKYGIVLDAGSSHTSMFVYKWPADKENDTGIVGQHSSCDVRGGGISSYANDPSRAGQSLVECLEQALRDVPKDRYASTPLYLGATAGMRLLNLTSPEATAKVLEAVTQTLTRYPFDFRGARILSGQDEGVFGWVTANYLLENFIKYGWVGRWIRPRKGTLGAMDLGGASTQITFETTSPSEDPDNEVHLRLYGQHYRVYTHSFLCYGRDQVLQRLLASALQIHRFHPCWPKGYSTQVLLREVYQSPCTMGQRPQTFNSSATVSLSGTSNAALCRDLVSGLFNISSCPFSQCSFNGVFQPPVAGNFIAFSAFYYTVDFLKTVMGLPVGTLKQLEDATETTCNQTWAELQARVPGQQTRLPDYCAVAMFIHQLLSRGYRFDERSFRGVVFEKKAADTAVGWALGYMLNLTNLIPADLPGLRKGTHFSSWVALLLLFTVLILAALVLLLRQVRSAKSPGAL.

The Cytoplasmic portion of the chain corresponds to 1–4; that stretch reads MAGK. Residues 5 to 25 form a helical membrane-spanning segment; that stretch reads LVSLVPPLLLAAVGLAGLLLL. The Extracellular segment spans residues 26–462; the sequence is CVPTQDVREP…PGLRKGTHFS (437 aa). Residue N64 is glycosylated (N-linked (GlcNAc...) asparagine). Residues C75 and C99 are joined by a disulfide bond. An N-linked (GlcNAc...) asparagine glycan is attached at N129. E165 (proton acceptor) is an active-site residue. Residue 204–208 participates in ATP binding; that stretch reads GASTQ. 2 disulfides stabilise this stretch: C242–C284 and C265–C310. N-linked (GlcNAc...) asparagine glycosylation is found at N294 and N319. Cystine bridges form between C323–C328 and C377–C399. Residues N378 and N443 are each glycosylated (N-linked (GlcNAc...) asparagine). Residues 463–483 form a helical membrane-spanning segment; sequence SWVALLLLFTVLILAALVLLL. At 484–495 the chain is on the cytoplasmic side; it reads RQVRSAKSPGAL.

It belongs to the GDA1/CD39 NTPase family. Ca(2+) serves as cofactor. The cofactor is Mg(2+).

It is found in the cell membrane. In the nervous system, could hydrolyze ATP and other nucleotides to regulate purinergic neurotransmission. Hydrolyzes ADP only to a marginal extent. The chain is Ectonucleoside triphosphate diphosphohydrolase 2 (Entpd2) from Mus musculus (Mouse).